We begin with the raw amino-acid sequence, 748 residues long: MAVKKFRSFDDFVPTISDSEEDVPDLDASDDEMEKKPVKSSKTKNKSKKKAKQQQGSHLDEDVHEDLNPEFQFSIDSGEVTTNFAGWDFQGDEKSDEVEKKDVDLDGIIRRKGGLIMMAATGSDAEESLSEESEEEPEEGDEPGESDDEDELALDGFGMGVKRKATEENEEDEEDEEEEDDDEDDDKKTEMSQADLGKGKDEDEDIEEDTKEEMAEFYAPEEESADAKKIVHKTFNSLSLSRPVLKGLGSLGYTSPSPIQSAAIPIALLGKDIIAGAVTGSGKTAAFMIPIIERLLYKPAHIASTRVVVLTPTRELAIQVADVGKNIGKFVNGLTFGLAVGGLNLRQQEQALKTRPDIVIATPGRFIDHLRNSASFSVDSVEILVIDEADRMLEEGFQEELQEIMSLIPSKRQTLLFSATMNSKIKQLISLSLKKPVRIMIDPPKQAADKLTQEFIRIRKRDHLKPALLYQLIRKLDNTSQKRIVVFVARKETAHKLRIVLGLLGMQVGELHGSLTQEQRLQSVNNFKSLQVPVLICTDLASRGLDIPKIEVVINFDMPKTYEIYLHRVGRTARAGREGRSVTFVGESSQDRSIVRSAIRSVEENAESGKALSRNVDWTQVEQVNSLIGAKGDVVEEIIEEEKQEKEILRAEMELRKGENMLKHKEEISARPRRTWFQSEAEKKNSKMLQVLAKNKKPINSKKRKQQEALAENPRLYKKTQKDRVEYQERQYSKKQAAYGKKGKKGKK.

Disordered stretches follow at residues 1-72 and 111-211; these read MAVK…PEFQ and RKGG…EDTK. A compositionally biased stretch (acidic residues) spans 18–32; sequence DSEEDVPDLDASDDE. Residues 38–52 show a composition bias toward basic residues; it reads VKSSKTKNKSKKKAK. Basic and acidic residues predominate over residues 58–67; it reads HLDEDVHEDL. Composition is skewed to acidic residues over residues 124–153, 168–185, and 202–211; these read DAEESLSEESEEEPEEGDEPGESDDEDELA, ENEEDEEDEEEEDDDEDD, and EDEDIEEDTK. The short motif at 233–261 is the Q motif element; the sequence is KTFNSLSLSRPVLKGLGSLGYTSPSPIQS. Residues 264–439 form the Helicase ATP-binding domain; that stretch reads IPIALLGKDI…SLSLKKPVRI (176 aa). Residue 277 to 284 participates in ATP binding; it reads AVTGSGKT. The DEAD box signature appears at 387 to 390; sequence DEAD. A Helicase C-terminal domain is found at 468–628; sequence LLYQLIRKLD…TQVEQVNSLI (161 aa). Positions 632-667 form a coiled coil; sequence GDVVEEIIEEEKQEKEILRAEMELRKGENMLKHKEE. A disordered region spans residues 687 to 748; that stretch reads KMLQVLAKNK…YGKKGKKGKK (62 aa). Residues 694–705 are compositionally biased toward basic residues; the sequence is KNKKPINSKKRK. Positions 720–732 are enriched in basic and acidic residues; it reads TQKDRVEYQERQY.

It belongs to the DEAD box helicase family. DDX27/DRS1 subfamily. Associates with pre-ribosomal particles.

It localises to the nucleus. It is found in the nucleolus. The catalysed reaction is ATP + H2O = ADP + phosphate + H(+). In terms of biological role, ATP-binding RNA helicase involved in ribosome assembly. The sequence is that of ATP-dependent RNA helicase DRS1 (DRS1) from Kluyveromyces lactis (strain ATCC 8585 / CBS 2359 / DSM 70799 / NBRC 1267 / NRRL Y-1140 / WM37) (Yeast).